We begin with the raw amino-acid sequence, 336 residues long: UDP-N-acetylenolpyruvoylglucosamine reductase (336 aa).

The FAD-binding PCMH-type domain occupies 1–178 (MAHSLQTLHT…TTVHLALPKE (178 aa)). The active site involves R154. S222 acts as the Proton donor in catalysis. The active site involves E318.

Belongs to the MurB family. It depends on FAD as a cofactor.

It localises to the cytoplasm. The catalysed reaction is UDP-N-acetyl-alpha-D-muramate + NADP(+) = UDP-N-acetyl-3-O-(1-carboxyvinyl)-alpha-D-glucosamine + NADPH + H(+). It functions in the pathway cell wall biogenesis; peptidoglycan biosynthesis. Its function is as follows. Cell wall formation. This is UDP-N-acetylenolpyruvoylglucosamine reductase from Pseudoalteromonas translucida (strain TAC 125).